The sequence spans 432 residues: Glutamate-1-semialdehyde 2,1-aminomutase (432 aa).

Position 265 is an N6-(pyridoxal phosphate)lysine (Lys265).

This sequence belongs to the class-III pyridoxal-phosphate-dependent aminotransferase family. HemL subfamily. As to quaternary structure, homodimer. It depends on pyridoxal 5'-phosphate as a cofactor.

The protein resides in the cytoplasm. The enzyme catalyses (S)-4-amino-5-oxopentanoate = 5-aminolevulinate. It participates in porphyrin-containing compound metabolism; protoporphyrin-IX biosynthesis; 5-aminolevulinate from L-glutamyl-tRNA(Glu): step 2/2. The polypeptide is Glutamate-1-semialdehyde 2,1-aminomutase (Vibrio cholerae serotype O1 (strain ATCC 39541 / Classical Ogawa 395 / O395)).